We begin with the raw amino-acid sequence, 295 residues long: 4-hydroxy-tetrahydrodipicolinate synthase (295 aa).

Residue Thr48 coordinates pyruvate. Tyr136 acts as the Proton donor/acceptor in catalysis. Catalysis depends on Lys164, which acts as the Schiff-base intermediate with substrate. Residue Ile206 participates in pyruvate binding.

Belongs to the DapA family. Homotetramer; dimer of dimers.

It localises to the cytoplasm. The catalysed reaction is L-aspartate 4-semialdehyde + pyruvate = (2S,4S)-4-hydroxy-2,3,4,5-tetrahydrodipicolinate + H2O + H(+). It participates in amino-acid biosynthesis; L-lysine biosynthesis via DAP pathway; (S)-tetrahydrodipicolinate from L-aspartate: step 3/4. In terms of biological role, catalyzes the condensation of (S)-aspartate-beta-semialdehyde [(S)-ASA] and pyruvate to 4-hydroxy-tetrahydrodipicolinate (HTPA). The polypeptide is 4-hydroxy-tetrahydrodipicolinate synthase (Actinobacillus pleuropneumoniae serotype 5b (strain L20)).